A 504-amino-acid polypeptide reads, in one-letter code: MELLNGTGLWSMAIFTVIFILLVDLMHRRHRWTSRYPPGPVPWPVLGNLLQVDLSNMPYSLYKLQHRYGDVFSLQKGWKPMVIVNRLKAVQEVLVTHGEDTADRPPVPIFKCLGVKPRSQGVILASYGPEWREQRRFSVSTLRTFGMGKKSLEEWVTKEAGHLCDAFTAQAGQSINPKAMLNKALCNVIASLIFARRFEYEDPYLIRMVKLVEESLTEVSGFIPEVLNTFPALLRIPGLADKVFQGQKTFMALLDNLLAENRTTWDPAQPPRNLTDAFLAEVEKAKGNPESSFNDENLRMVVVDLFTAGMVTTATTLTWALLLMILYPDVQRRVQQEIDEVIGQVRCPEMTDQAHMPYTNAVIHEVQRFGDIAPLNLPRFTSCDIEVQDFVIPKGTTLIINLSSVLKDETVWEKPHRFHPEHFLDAQGNFVKHEAFMPFSAGRRACLGEPLARMELFLFFTCLLQRFSFSVPVGQPRPSTHGFFAFPVAPLPYQLCAVVREQGL.

Cysteine 446 is a heme binding site.

It belongs to the cytochrome P450 family. Heme is required as a cofactor.

Its subcellular location is the endoplasmic reticulum membrane. The protein resides in the microsome membrane. The enzyme catalyses an organic molecule + reduced [NADPH--hemoprotein reductase] + O2 = an alcohol + oxidized [NADPH--hemoprotein reductase] + H2O + H(+). Functionally, cytochromes P450 are a group of heme-thiolate monooxygenases. In liver microsomes, this enzyme is involved in an NADPH-dependent electron transport pathway. It oxidizes a variety of structurally unrelated compounds, including steroids, fatty acids, and xenobiotics. In Rattus norvegicus (Rat), this protein is Cytochrome P450 2D1 (Cyp2d1).